A 1149-amino-acid polypeptide reads, in one-letter code: Phytochrome B-2 (1149 aa).

A disordered region spans residues 1 to 48 (MASASGAENSSVPPSPLPPPPPPQIHTSRTKLSHHHHNNNNNNNNNID). Pro residues predominate over residues 13-24 (PPSPLPPPPPPQ). Residues 28-38 (SRTKLSHHHHN) show a composition bias toward basic residues. A GAF domain is found at 267–449 (DRVMVYRFHE…TQTLLCDMLL (183 aa)). Residue Cys353 participates in phytochromobilin binding. 2 consecutive PAS domains span residues 641-712 (VARE…LKGE) and 775-846 (DYKA…MIVL). Positions 923-1143 (YICQGVKNPL…YVLLELPVTR (221 aa)) constitute a Histidine kinase domain.

Belongs to the phytochrome family. Heterodimer between subunit A and subunit B. Contains one covalently linked phytochromobilin chromophore.

Functionally, regulatory photoreceptor which exists in two forms that are reversibly interconvertible by light: the Pr form that absorbs maximally in the red region of the spectrum and the Pfr form that absorbs maximally in the far-red region. Photoconversion of Pr to Pfr induces an array of morphogenic responses, whereas reconversion of Pfr to Pr cancels the induction of those responses. Pfr controls the expression of a number of nuclear genes including those encoding the small subunit of ribulose-bisphosphate carboxylase, chlorophyll A/B binding protein, protochlorophyllide reductase, rRNA, etc. It also controls the expression of its own gene(s) in a negative feedback fashion. The sequence is that of Phytochrome B-2 from Glycine max (Soybean).